The sequence spans 105 residues: Thioredoxin (105 aa).

Positions 1–105 (VQVISSYDQF…LQAAITQHSA (105 aa)) constitute a Thioredoxin domain. Catalysis depends on nucleophile residues C29 and C32. The cysteines at positions 29 and 32 are disulfide-linked.

Belongs to the thioredoxin family. Monomer.

Its function is as follows. Participates in various redox reactions through the reversible oxidation of its active center dithiol to a disulfide and catalyzes dithiol-disulfide exchange reactions. The polypeptide is Thioredoxin (Malassezia sympodialis (Atopic eczema-associated yeast)).